The primary structure comprises 301 residues: Leucine-rich repeat-containing protein 30 (301 aa).

LRR repeat units lie at residues 72–93 (EVQK…VGKL), 95–116 (RIVV…VSLL), 118–139 (CLKV…LSLC), 141–163 (KLEV…ADLS), 164–185 (RLRK…VFSL), 187–208 (ELIF…IQHL), 210–231 (SLQI…LCLV), 233–254 (SLEL…LHLL), and 265–287 (MDKG…VEGG).

This is Leucine-rich repeat-containing protein 30 (LRRC30) from Homo sapiens (Human).